The sequence spans 67 residues: uncharacterized protein (67 aa).

The next 2 helical transmembrane spans lie at 10-32 and 44-66; these read NLSH…TAFI and ATLT…MGQW.

It is found in the cell membrane. This is an uncharacterized protein from Archaeoglobus fulgidus (strain ATCC 49558 / DSM 4304 / JCM 9628 / NBRC 100126 / VC-16).